The sequence spans 2188 residues: Glutamate synthase 2 [NADH], chloroplastic (2188 aa).

Residues methionine 1–serine 30 constitute a chloroplast transit peptide. 2 disordered regions span residues alanine 14–arginine 40 and valine 61–serine 94. Positions alanine 65–alanine 80 are enriched in low complexity. Residue cysteine 107 is the Nucleophile of the active site. One can recognise a Glutamine amidotransferase type-2 domain in the interval cysteine 107–glutamate 511. Leucine 1198 to arginine 1255 is an FMN binding site. Residues cysteine 1251, cysteine 1257, and cysteine 1262 each coordinate [3Fe-4S] cluster. Glycine 1974–arginine 1988 is a binding site for NAD(+).

It belongs to the glutamate synthase family. As to quaternary structure, monomer. The cofactor is [3Fe-4S] cluster. It depends on FAD as a cofactor. FMN is required as a cofactor. As to expression, expressed in leaf blades and sheaths.

The protein localises to the plastid. It localises to the chloroplast. It catalyses the reaction 2 L-glutamate + NAD(+) = L-glutamine + 2-oxoglutarate + NADH + H(+). The protein operates within amino-acid biosynthesis; L-glutamate biosynthesis via GLT pathway; L-glutamate from 2-oxoglutarate and L-glutamine (NAD(+) route): step 1/1. It participates in energy metabolism; nitrogen metabolism. In terms of biological role, involved in glutamate biosynthesis. The chain is Glutamate synthase 2 [NADH], chloroplastic from Oryza sativa subsp. japonica (Rice).